We begin with the raw amino-acid sequence, 494 residues long: Ketol-acid reductoisomerase (NADP(+)) (494 aa).

In terms of domain architecture, KARI N-terminal Rossmann spans 14 to 208 (LDQLGRCRFM…GGHRAGCLES (195 aa)). NADP(+) is bound by residues 45–48 (CGAQ), Arg-68, Arg-76, Ser-78, and 108–110 (DKQ). Residue His-132 is part of the active site. Gly-158 provides a ligand contact to NADP(+). 2 KARI C-terminal knotted domains span residues 209-344 (SFVA…NYPE) and 345-487 (TDVE…MTDM). Residues Asp-217, Glu-221, Glu-389, and Glu-393 each coordinate Mg(2+). Position 414 (Ser-414) interacts with substrate.

Belongs to the ketol-acid reductoisomerase family. Requires Mg(2+) as cofactor.

It catalyses the reaction (2R)-2,3-dihydroxy-3-methylbutanoate + NADP(+) = (2S)-2-acetolactate + NADPH + H(+). The catalysed reaction is (2R,3R)-2,3-dihydroxy-3-methylpentanoate + NADP(+) = (S)-2-ethyl-2-hydroxy-3-oxobutanoate + NADPH + H(+). It functions in the pathway amino-acid biosynthesis; L-isoleucine biosynthesis; L-isoleucine from 2-oxobutanoate: step 2/4. Its pathway is amino-acid biosynthesis; L-valine biosynthesis; L-valine from pyruvate: step 2/4. In terms of biological role, involved in the biosynthesis of branched-chain amino acids (BCAA). Catalyzes an alkyl-migration followed by a ketol-acid reduction of (S)-2-acetolactate (S2AL) to yield (R)-2,3-dihydroxy-isovalerate. In the isomerase reaction, S2AL is rearranged via a Mg-dependent methyl migration to produce 3-hydroxy-3-methyl-2-ketobutyrate (HMKB). In the reductase reaction, this 2-ketoacid undergoes a metal-dependent reduction by NADPH to yield (R)-2,3-dihydroxy-isovalerate. In Vibrio parahaemolyticus serotype O3:K6 (strain RIMD 2210633), this protein is Ketol-acid reductoisomerase (NADP(+)).